The sequence spans 262 residues: Indole-3-glycerol phosphate synthase (262 aa).

The protein belongs to the TrpC family.

The enzyme catalyses 1-(2-carboxyphenylamino)-1-deoxy-D-ribulose 5-phosphate + H(+) = (1S,2R)-1-C-(indol-3-yl)glycerol 3-phosphate + CO2 + H2O. It participates in amino-acid biosynthesis; L-tryptophan biosynthesis; L-tryptophan from chorismate: step 4/5. This chain is Indole-3-glycerol phosphate synthase, found in Staphylococcus epidermidis (strain ATCC 12228 / FDA PCI 1200).